The primary structure comprises 363 residues: NAD(P)H-quinone oxidoreductase subunit 1, chloroplastic (363 aa).

Transmembrane regions (helical) follow at residues 30 to 50 (LIPIFTLVLGITIGVLVIVWL), 104 to 124 (IAVISILLSYLVIPFSYHLVL), 127 to 147 (LSIGVFLWIAISSIAPVGLLM), 248 to 268 (YSGIKFGLFYVASYLNLLVSS), 300 to 320 (VFGTIIGIFITLAKTYLFLFI), and 343 to 363 (FLLPISLGNLLLTTCSQLISL).

It belongs to the complex I subunit 1 family. As to quaternary structure, NDH is composed of at least 16 different subunits, 5 of which are encoded in the nucleus.

It localises to the plastid. Its subcellular location is the chloroplast thylakoid membrane. The catalysed reaction is a plastoquinone + NADH + (n+1) H(+)(in) = a plastoquinol + NAD(+) + n H(+)(out). The enzyme catalyses a plastoquinone + NADPH + (n+1) H(+)(in) = a plastoquinol + NADP(+) + n H(+)(out). NDH shuttles electrons from NAD(P)H:plastoquinone, via FMN and iron-sulfur (Fe-S) centers, to quinones in the photosynthetic chain and possibly in a chloroplast respiratory chain. The immediate electron acceptor for the enzyme in this species is believed to be plastoquinone. Couples the redox reaction to proton translocation, and thus conserves the redox energy in a proton gradient. The protein is NAD(P)H-quinone oxidoreductase subunit 1, chloroplastic of Lactuca sativa (Garden lettuce).